We begin with the raw amino-acid sequence, 428 residues long: 3-phosphoshikimate 1-carboxyvinyltransferase (428 aa).

3-phosphoshikimate contacts are provided by Lys-23, Ser-24, and Arg-28. Lys-23 contributes to the phosphoenolpyruvate binding site. Phosphoenolpyruvate is bound by residues Gly-97 and Arg-125. 7 residues coordinate 3-phosphoshikimate: Ser-170, Ser-171, Gln-172, Ser-198, Asp-314, Asn-337, and Lys-341. Residue Gln-172 participates in phosphoenolpyruvate binding. Asp-314 functions as the Proton acceptor in the catalytic mechanism. The phosphoenolpyruvate site is built by Arg-345, Arg-387, and Lys-412.

It belongs to the EPSP synthase family. As to quaternary structure, monomer.

Its subcellular location is the cytoplasm. The catalysed reaction is 3-phosphoshikimate + phosphoenolpyruvate = 5-O-(1-carboxyvinyl)-3-phosphoshikimate + phosphate. The protein operates within metabolic intermediate biosynthesis; chorismate biosynthesis; chorismate from D-erythrose 4-phosphate and phosphoenolpyruvate: step 6/7. Functionally, catalyzes the transfer of the enolpyruvyl moiety of phosphoenolpyruvate (PEP) to the 5-hydroxyl of shikimate-3-phosphate (S3P) to produce enolpyruvyl shikimate-3-phosphate and inorganic phosphate. The polypeptide is 3-phosphoshikimate 1-carboxyvinyltransferase (Hamiltonella defensa subsp. Acyrthosiphon pisum (strain 5AT)).